A 900-amino-acid polypeptide reads, in one-letter code: 3'-5' exonuclease DinG (900 aa).

Residues 8-161 enclose the Exonuclease domain; the sequence is VVDLETTGNQ…DEDATTTALL (154 aa). Residues 241–496 form the Helicase ATP-binding domain; it reads SEVVKSLNLT…KAIDKLEQQR (256 aa). Residue 276–283 participates in ATP binding; it reads APLGSGKS. The short motif at 448-451 is the DEAH box element; it reads DEAH. The 181-residue stretch at 713–893 folds into the Helicase C-terminal domain; that stretch reads DYIQEYVTIT…QFSKLVNKIQ (181 aa).

The protein belongs to the helicase family. DinG subfamily. Type 2 sub-subfamily.

3'-5' exonuclease. The sequence is that of 3'-5' exonuclease DinG from Staphylococcus haemolyticus (strain JCSC1435).